A 254-amino-acid polypeptide reads, in one-letter code: 3-oxo-5-alpha-steroid 4-dehydrogenase 2 (254 aa).

4 consecutive transmembrane segments (helical) span residues 8 to 28 (VPVL…LCFG), 72 to 92 (PRSL…AHYF), 146 to 166 (FSVG…SDCM), and 206 to 226 (LATW…FLGM).

Belongs to the steroid 5-alpha reductase family.

The protein localises to the microsome membrane. Its subcellular location is the endoplasmic reticulum membrane. It carries out the reaction a 3-oxo-5alpha-steroid + NADP(+) = a 3-oxo-Delta(4)-steroid + NADPH + H(+). The catalysed reaction is 17beta-hydroxy-5alpha-androstan-3-one + NADP(+) = testosterone + NADPH + H(+). It catalyses the reaction 5alpha-pregnane-3,20-dione + NADP(+) = progesterone + NADPH + H(+). Its function is as follows. Converts testosterone (T) into 5-alpha-dihydrotestosterone (DHT) and progesterone or corticosterone into their corresponding 5-alpha-3-oxosteroids. It plays a central role in sexual differentiation and androgen physiology. The polypeptide is 3-oxo-5-alpha-steroid 4-dehydrogenase 2 (Srd5a2) (Mus musculus (Mouse)).